The sequence spans 1253 residues: Methionine synthase (1253 aa).

One can recognise a Hcy-binding domain in the interval glutamine 6–valine 326. Zn(2+)-binding residues include cysteine 248, cysteine 311, and cysteine 312. One can recognise a Pterin-binding domain in the interval phenylalanine 359–glutamate 620. Residues glycine 370–lysine 372, aspartate 437, asparagine 458, aspartate 525, asparagine 567, arginine 573, and arginine 579 contribute to the (6S)-5,6,7,8-tetrahydrofolate site. The 98-residue stretch at glutamine 650–arginine 747 folds into the B12-binding N-terminal domain. Methylcob(III)alamin is bound by residues glutamate 697, glycine 770 to aspartate 774, histidine 773, serine 818, threonine 822, and alanine 874. The region spanning glutamine 760–glutamate 895 is the B12-binding domain. The AdoMet activation domain occupies serine 911–aspartate 1253. S-adenosyl-L-methionine is bound by residues aspartate 962, arginine 1160, and tyrosine 1215–phenylalanine 1216. Phosphothreonine is present on threonine 1252.

Belongs to the vitamin-B12 dependent methionine synthase family. As to quaternary structure, monomer. Dimer. Forms a multiprotein complex with MMACHC, MMADHC and MTRR. Requires methylcob(III)alamin as cofactor. Zn(2+) is required as a cofactor.

It localises to the cytoplasm. It carries out the reaction (6S)-5-methyl-5,6,7,8-tetrahydrofolate + L-homocysteine = (6S)-5,6,7,8-tetrahydrofolate + L-methionine. The protein operates within amino-acid biosynthesis; L-methionine biosynthesis via de novo pathway; L-methionine from L-homocysteine (MetH route): step 1/1. Its function is as follows. Catalyzes the transfer of a methyl group from methylcob(III)alamin (MeCbl) to homocysteine, yielding enzyme-bound cob(I)alamin and methionine in the cytosol. MeCbl is an active form of cobalamin (vitamin B12) used as a cofactor for methionine biosynthesis. Cob(I)alamin form is regenerated to MeCbl by a transfer of a methyl group from 5-methyltetrahydrofolate. The processing of cobalamin in the cytosol occurs in a multiprotein complex composed of at least MMACHC, MMADHC, MTRR (methionine synthase reductase) and MTR which may contribute to shuttle safely and efficiently cobalamin towards MTR in order to produce methionine. The chain is Methionine synthase (Mtr) from Rattus norvegicus (Rat).